The chain runs to 280 residues: Maltodextrin transport system permease protein MalD (280 aa).

6 helical membrane passes run 15 to 35 (LTYL…LITI), 77 to 97 (LIIA…AGYA), 110 to 130 (LVFF…AFFV), 142 to 162 (WFLI…LMKG), 200 to 220 (VQAL…SFLL), and 244 to 264 (IAYF…LFFF). One can recognise an ABC transmembrane type-1 domain in the interval 73-265 (YLNTLIIALI…LPICILFFFL (193 aa)).

The protein belongs to the binding-protein-dependent transport system permease family. MalFG subfamily.

Its subcellular location is the cell membrane. Part of the binding-protein-dependent transport system for maltodextrin; probably responsible for the translocation of the substrate across the membrane. This is Maltodextrin transport system permease protein MalD (malD) from Streptococcus pneumoniae (strain ATCC BAA-255 / R6).